A 339-amino-acid chain; its full sequence is DNA-directed RNA polymerase subunit alpha (339 aa).

Residues 1–235 are alpha N-terminal domain (alpha-NTD); it reads MVLQKNWQSL…DQLQLFINFD (235 aa). The interval 251–339 is alpha C-terminal domain (alpha-CTD); sequence FNRNLLRKVD…DLAKRLDEPF (89 aa).

This sequence belongs to the RNA polymerase alpha chain family. As to quaternary structure, homodimer. The RNAP catalytic core consists of 2 alpha, 1 beta, 1 beta' and 1 omega subunit. When a sigma factor is associated with the core the holoenzyme is formed, which can initiate transcription.

It carries out the reaction RNA(n) + a ribonucleoside 5'-triphosphate = RNA(n+1) + diphosphate. Functionally, DNA-dependent RNA polymerase catalyzes the transcription of DNA into RNA using the four ribonucleoside triphosphates as substrates. In Gluconacetobacter diazotrophicus (strain ATCC 49037 / DSM 5601 / CCUG 37298 / CIP 103539 / LMG 7603 / PAl5), this protein is DNA-directed RNA polymerase subunit alpha.